A 483-amino-acid polypeptide reads, in one-letter code: Keratin, type II cytoskeletal 7 (483 aa).

An N-acetylserine modification is found at Ser2. Residues Ser2, Ser6, and Ser7 each carry the phosphoserine modification. Residues Ser2 to Glu107 are head. Ser12 carries an O-linked (GlcNAc) serine glycan. Positions Ser14–Ser37 are disordered. Arg20 bears the Dimethylated arginine; alternate mark. Arg20 bears the Omega-N-methylarginine; alternate mark. The segment covering Arg25 to Ser37 has biased composition (low complexity). Phosphoserine is present on residues Ser63 and Ser88. Residues Glu107–Leu143 are coil 1A. The IF rod domain maps to Glu108–Leu420. Thr114 is modified (phosphothreonine). The tract at residues Gln144 to His161 is linker 1. A Glycyl lysine isopeptide (Lys-Gly) (interchain with G-Cter in SUMO2) cross-link involves residue Lys147. The coil 1B stretch occupies residues Ile162–Leu253. Lys196 bears the N6-acetyllysine mark. A linker 12 region spans residues Gln254–Ile277. Phosphoserine occurs at positions 269 and 271. The interval Ile278–Glu416 is coil 2. Residues Lys282 and Lys303 each participate in a glycyl lysine isopeptide (Lys-Gly) (interchain with G-Cter in SUMO2) cross-link. Thr306 is subject to Phosphothreonine. Residues Lys313 and Lys348 each participate in a glycyl lysine isopeptide (Lys-Gly) (interchain with G-Cter in SUMO2) cross-link. The tract at residues Glu417 to Asn483 is tail.

Belongs to the intermediate filament family. As to quaternary structure, heterotetramer of two type I and two type II keratins. Interacts with eukaryotic translation initiator factor 3 (eIF3) subunit EIF3S10. Interacts with GPER1. Arg-20 is dimethylated, probably to asymmetric dimethylarginine.

In terms of biological role, blocks interferon-dependent interphase and stimulates DNA synthesis in cells. The polypeptide is Keratin, type II cytoskeletal 7 (Potorous tridactylus (Potoroo)).